Consider the following 178-residue polypeptide: Large ribosomal subunit protein uL13m (178 aa).

The residue at position 2 (Ser-2) is an N-acetylserine.

Belongs to the universal ribosomal protein uL13 family. In terms of assembly, component of the mitochondrial large ribosomal subunit (mt-LSU). Mature mammalian 55S mitochondrial ribosomes consist of a small (28S) and a large (39S) subunit. The 28S small subunit contains a 12S ribosomal RNA (12S mt-rRNA) and 30 different proteins. The 39S large subunit contains a 16S rRNA (16S mt-rRNA), a copy of mitochondrial valine transfer RNA (mt-tRNA(Val)), which plays an integral structural role, and 52 different proteins. Interacts with OXA1L.

Its subcellular location is the mitochondrion. In Homo sapiens (Human), this protein is Large ribosomal subunit protein uL13m (MRPL13).